The primary structure comprises 390 residues: MKATGIVVEYNPFHNGHKLHLNKARELTQADVVIAVMSGSFVQRGEPAIIPKWERAKMALAAGVDMVIELPVSFATQHATIFAEEAVRILDAIHVDTLFFGSEHGVAEDFTFAAKKVVENEARFDEAIQLALVDKKTSYARAYTEAFKKLFGQNLLDITKPNNILGFHYALAAQNQNPSISLQTIPREHAGYHDEEANHDQIASATAIRKLILAGKLEEASHYLPASSIAILRNYEGPFLSWKDYWSFLQYRLIQAGSEELEGIRGVSEGIQNRMQQAATKAQNFSDFIELTKTKRYSNTRLQRTALQILLNARSQTSSPYIRILGMNKTGQQYLSLHKKNISLPIVTTVSKAPVGLLEEELRATNIYTLAKGLENYQAGDFHIPPILTL.

Residues 7–20 (VVEYNPFHNGHKLH), Gly-101, Asn-162, and Arg-187 each bind ATP.

The protein belongs to the TmcAL family.

The protein resides in the cytoplasm. It carries out the reaction cytidine(34) in elongator tRNA(Met) + acetate + ATP = N(4)-acetylcytidine(34) in elongator tRNA(Met) + AMP + diphosphate. In terms of biological role, catalyzes the formation of N(4)-acetylcytidine (ac(4)C) at the wobble position of elongator tRNA(Met), using acetate and ATP as substrates. First activates an acetate ion to form acetyladenylate (Ac-AMP) and then transfers the acetyl group to tRNA to form ac(4)C34. The polypeptide is tRNA(Met) cytidine acetate ligase (Listeria monocytogenes serotype 4a (strain HCC23)).